The following is a 514-amino-acid chain: Histidine ammonia-lyase (514 aa).

The segment at residues 144 to 146 (ASG) is a cross-link (5-imidazolinone (Ala-Gly)). At Ser145 the chain carries 2,3-didehydroalanine (Ser).

The protein belongs to the PAL/histidase family. Post-translationally, contains an active site 4-methylidene-imidazol-5-one (MIO), which is formed autocatalytically by cyclization and dehydration of residues Ala-Ser-Gly.

It is found in the cytoplasm. The enzyme catalyses L-histidine = trans-urocanate + NH4(+). The protein operates within amino-acid degradation; L-histidine degradation into L-glutamate; N-formimidoyl-L-glutamate from L-histidine: step 1/3. This chain is Histidine ammonia-lyase, found in Rhodospirillum rubrum (strain ATCC 11170 / ATH 1.1.1 / DSM 467 / LMG 4362 / NCIMB 8255 / S1).